The chain runs to 712 residues: Small ribosomal subunit protein uS3c (712 aa).

Residues 1–118 (MGQKVHPLGF…IKVSKDLVTN (118 aa)) form an S3-like 1st part region. Residues 119 to 580 (LQKTRKYLFK…LQTAFLTQIE (462 aa)) are intervening sequence (IVS). The tract at residues 581–712 (SQRKMYKANL…VWIFKGYSKI (132 aa)) is S3-like 2nd part.

Belongs to the universal ribosomal protein uS3 family. In terms of assembly, part of the 30S ribosomal subunit.

It localises to the plastid. It is found in the chloroplast. This Chlamydomonas reinhardtii (Chlamydomonas smithii) protein is Small ribosomal subunit protein uS3c (rps3).